Here is a 125-residue protein sequence, read N- to C-terminus: Methylglyoxal synthase (125 aa).

Residues 1–125 form the MGS-like domain; that stretch reads MTERLRIALI…TAEKLIKALD (125 aa). Substrate is bound by residues His12, Lys16, 38 to 41, and 59 to 60; these read TGTT and SG. Residue Asp65 is the Proton donor/acceptor of the active site. Residue His92 coordinates substrate.

It belongs to the methylglyoxal synthase family.

The catalysed reaction is dihydroxyacetone phosphate = methylglyoxal + phosphate. In terms of biological role, catalyzes the formation of methylglyoxal from dihydroxyacetone phosphate. This chain is Methylglyoxal synthase, found in Brucella anthropi (strain ATCC 49188 / DSM 6882 / CCUG 24695 / JCM 21032 / LMG 3331 / NBRC 15819 / NCTC 12168 / Alc 37) (Ochrobactrum anthropi).